Consider the following 378-residue polypeptide: Succinyl-diaminopimelate desuccinylase (378 aa).

Zn(2+) is bound at residue H66. The active site involves D68. D100 is a binding site for Zn(2+). The active-site Proton acceptor is the E134. 3 residues coordinate Zn(2+): E135, E163, and H350.

It belongs to the peptidase M20A family. DapE subfamily. As to quaternary structure, homodimer. Zn(2+) serves as cofactor. The cofactor is Co(2+).

The enzyme catalyses N-succinyl-(2S,6S)-2,6-diaminopimelate + H2O = (2S,6S)-2,6-diaminopimelate + succinate. It participates in amino-acid biosynthesis; L-lysine biosynthesis via DAP pathway; LL-2,6-diaminopimelate from (S)-tetrahydrodipicolinate (succinylase route): step 3/3. Its function is as follows. Catalyzes the hydrolysis of N-succinyl-L,L-diaminopimelic acid (SDAP), forming succinate and LL-2,6-diaminopimelate (DAP), an intermediate involved in the bacterial biosynthesis of lysine and meso-diaminopimelic acid, an essential component of bacterial cell walls. The polypeptide is Succinyl-diaminopimelate desuccinylase (Hydrogenovibrio crunogenus (strain DSM 25203 / XCL-2) (Thiomicrospira crunogena)).